The sequence spans 439 residues: tRNA-2-methylthio-N(6)-dimethylallyladenosine synthase (439 aa).

An MTTase N-terminal domain is found at 2–119; sequence KYIYIKTWGC…LPKMIDEVEK (118 aa). [4Fe-4S] cluster is bound by residues C11, C48, C82, C156, C160, and C163. The Radical SAM core domain maps to 142 to 374; it reads KKKGYTADIS…QERINIQTML (233 aa). The region spanning 377–439 is the TRAM domain; sequence RKMFGSIQSV…HTHSLKGELF (63 aa).

It belongs to the methylthiotransferase family. MiaB subfamily. In terms of assembly, monomer. [4Fe-4S] cluster serves as cofactor.

The protein resides in the cytoplasm. The catalysed reaction is N(6)-dimethylallyladenosine(37) in tRNA + (sulfur carrier)-SH + AH2 + 2 S-adenosyl-L-methionine = 2-methylsulfanyl-N(6)-dimethylallyladenosine(37) in tRNA + (sulfur carrier)-H + 5'-deoxyadenosine + L-methionine + A + S-adenosyl-L-homocysteine + 2 H(+). Catalyzes the methylthiolation of N6-(dimethylallyl)adenosine (i(6)A), leading to the formation of 2-methylthio-N6-(dimethylallyl)adenosine (ms(2)i(6)A) at position 37 in tRNAs that read codons beginning with uridine. The chain is tRNA-2-methylthio-N(6)-dimethylallyladenosine synthase from Buchnera aphidicola subsp. Acyrthosiphon pisum (strain APS) (Acyrthosiphon pisum symbiotic bacterium).